Reading from the N-terminus, the 235-residue chain is Cobalt transport protein CbiM (235 aa).

Helical transmembrane passes span 6-26 (GVLP…FVVH), 43-63 (LLLA…LPSV), 85-105 (MAFM…HGGI), 108-128 (LGAN…GAYV), 133-153 (LGGP…LSTY), and 181-201 (IFAI…ILLF).

It belongs to the CbiM family. As to quaternary structure, forms an energy-coupling factor (ECF) transporter complex composed of an ATP-binding protein (A component, CbiO), a transmembrane protein (T component, CbiQ) and 2 possible substrate-capture proteins (S components, CbiM and CbiN) of unknown stoichimetry.

Its subcellular location is the cell membrane. Its pathway is cofactor biosynthesis; adenosylcobalamin biosynthesis. Part of the energy-coupling factor (ECF) transporter complex CbiMNOQ involved in cobalt import. This is Cobalt transport protein CbiM from Propionibacterium freudenreichii subsp. shermanii (strain ATCC 9614 / DSM 4902 / CIP 103027 / NCIMB 8099 / CIRM-BIA1).